The chain runs to 473 residues: Poly(A) polymerase catalytic subunit (473 aa).

Residues Asp193 and Asp195 contribute to the active site.

It belongs to the poxviridae poly(A) polymerase catalytic subunit family. Heterodimer of a large (catalytic) subunit and a small (regulatory) subunit.

It catalyses the reaction RNA(n) + ATP = RNA(n)-3'-adenine ribonucleotide + diphosphate. Functionally, polymerase that creates the 3'-poly(A) tail of mRNA's. This Crocodylus johnstoni (Australian freshwater crocodile) protein is Poly(A) polymerase catalytic subunit (PAPL).